The sequence spans 86 residues: Small ribosomal subunit protein bS16 (86 aa).

It belongs to the bacterial ribosomal protein bS16 family.

This chain is Small ribosomal subunit protein bS16, found in Xylella fastidiosa (strain M12).